Here is a 222-residue protein sequence, read N- to C-terminus: uncharacterized protein (222 aa).

This is an uncharacterized protein from Methanocaldococcus jannaschii (strain ATCC 43067 / DSM 2661 / JAL-1 / JCM 10045 / NBRC 100440) (Methanococcus jannaschii).